The sequence spans 189 residues: Myb-like protein T (189 aa).

A Myb-like domain is found at 121–172 (NWSPDEQKALMVEVSTLGNKSEINWFFISQQLFLKGISRNARECQRKHESIQ).

The sequence is that of Myb-like protein T (mybT) from Dictyostelium discoideum (Social amoeba).